Here is a 174-residue protein sequence, read N- to C-terminus: Late lactation protein B (174 aa).

An N-terminal signal peptide occupies residues methionine 1–alanine 18. Cysteine 77 and cysteine 169 are oxidised to a cystine.

It belongs to the calycin superfamily. Lipocalin family. As to expression, mammary gland specific. Secreted in milk.

It localises to the secreted. Its function is as follows. Probably serves a role in the transport of a small ligand released during the hydrolysis of milk fat. The sequence is that of Late lactation protein B (LLPB) from Notamacropus eugenii (Tammar wallaby).